A 363-amino-acid polypeptide reads, in one-letter code: MPLSRLMIQQFRNIKACDIRLSAGFNFLIGPNGSGKTSVLEAIYLLGHGRSFKSSLTGRIIQNECSELFVHGRICEHSLSSDQFELPVGINKQRDGSTEVKIGGQTGQKLAQLAQILPLQLIHPEGFELLTDGPKQRRAFIDWGVFHTEPAFFDAWGRFKRLSKQRNALLKSAQSYRELSYWDQELARLAEQIDQWRESYVNQLKNVAEQLCRTFLPEFDIDLKYYRGWEKDQPYQSILEKNFERDQQLGYTFSGPNKADLRIKVNATPVEDVLSRGQLKLMVCALRVAQGQHLTELTGKQCIYLIDDFASELDSLRRQRLADSLKGTGAQVFVSSITESQVADMLDESSKTFHVAHGVIEQG.

Residue glycine 30–threonine 37 participates in ATP binding.

Belongs to the RecF family.

The protein localises to the cytoplasm. The RecF protein is involved in DNA metabolism; it is required for DNA replication and normal SOS inducibility. RecF binds preferentially to single-stranded, linear DNA. It also seems to bind ATP. This is DNA replication and repair protein RecF from Vibrio cholerae serotype O1 (strain ATCC 39541 / Classical Ogawa 395 / O395).